The chain runs to 1816 residues: Kinesin-like protein KIF1B (1816 aa).

N-acetylserine is present on S2. One can recognise a Kinesin motor domain in the interval 5–354 (SVKVAVRVRP…LRYADRAKQI (350 aa)). Residue 97 to 104 (GQTGAGKS) participates in ATP binding. An interaction with KIFBP region spans residues 270 to 350 (NINKSLTTLG…TLSTLRYADR (81 aa)). Residues 365–386 (NAKLVRELKEEVTRLKDLLRAQ) are a coiled coil. A disordered region spans residues 431–450 (FSTASMGSLTSSPSSCSLSS). The segment covering 432-450 (STASMGSLTSSPSSCSLSS) has biased composition (low complexity). The stretch at 470 to 502 (GEEAIERLKESEKIIAELNETWEEKLRKTEAIR) forms a coiled coil. Residues 556–612 (TRVGQADAERRQDIVLSGAHIKEEHCIFRSERSNSGEVIVTLEPCERSETYVNGKRV) form the FHA domain. 2 positions are modified to phosphothreonine: T647 and T652. Phosphoserine is present on residues Q663 and E665. Coiled-coil stretches lie at residues 668–737 (EKQG…EEEV) and 841–869 (SLEKLKQRLDLMREMYDRAGEMASSAQDE). Phosphoserine is present on residues S1054 and S1057. Position 1075 is a phosphothreonine (T1075). Residues N1141, S1416, S1454, and S1487 each carry the phosphoserine modification. Positions 1550–1570 (STTTFESAITPSESSGYDSGD) are disordered. Polar residues predominate over residues 1554 to 1566 (FESAITPSESSGY). 4 positions are modified to phosphoserine: S1573, S1603, S1610, and S1613. Positions 1617 to 1660 (RDPSESSFSSATLTPSSTCPSLVDSRSNSLDQKTPEANSRASSP) are disordered. Positions 1621–1634 (ESSFSSATLTPSST) are enriched in low complexity. Positions 1640-1658 (DSRSNSLDQKTPEANSRAS) are enriched in polar residues. In terms of domain architecture, PH spans 1702–1799 (VSKKGYLHFK…WLYAFNPLLA (98 aa)).

This sequence belongs to the TRAFAC class myosin-kinesin ATPase superfamily. Kinesin family. Unc-104 subfamily. As to quaternary structure, monomer. Interacts with KIFBP; positively regulates KIF1B microtubule motor activity. Interacts (via C-terminus end of the kinesin-motor domain) with CHP1; the interaction occurs in a calcium-dependent manner. Interacts with MADD (via death domain); links this isoform to Rab3-carrying vesicles in anterograde synaptic vesicle transport. As to expression, isoform 3 is abundant in the skeletal muscle. It is also expressed in fetal brain, lung and kidney, and adult heart, placenta, testis, ovary and small intestine. Isoform 2 is abundant in the brain and also expressed in fetal heart, lung, liver and kidney, and adult skeletal muscle, placenta, liver, kidney, heart, spleen, thymus, prostate, testis, ovary, small intestine, colon and pancreas.

The protein resides in the cytoplasm. It is found in the cytoskeleton. Its subcellular location is the cytoplasmic vesicle. The protein localises to the secretory vesicle. It localises to the synaptic vesicle membrane. The protein resides in the mitochondrion. The enzyme catalyses ATP + H2O + a kinesin associated with a microtubule at position (n) = ADP + phosphate a kinesin associated with a microtubule at position (n+1, toward the plus end).. Has a plus-end-directed microtubule motor activity and functions as a motor for transport of vesicles and organelles along microtubules. Its function is as follows. Has a plus-end-directed microtubule motor activity and functions as a motor for anterograde synaptic vesicle transport along axonal microtubules from the cell body to the presynapse in neuronal cells. Functions as a downstream effector in a developmental apoptotic pathway that is activated when nerve growth factor (NGF) becomes limiting for neuronal progenitor cells. Functionally, has a plus-end-directed microtubule motor activity and functions as a motor for anterograde transport of mitochondria. In Homo sapiens (Human), this protein is Kinesin-like protein KIF1B.